The sequence spans 211 residues: Intermembrane phospholipid transport system binding protein MlaC (211 aa).

Positions 1–21 (MFKRLMMVALLVIAPLSAATA) are cleaved as a signal peptide.

Belongs to the MlaC/ttg2D family. In terms of assembly, interacts with the MlaA-OmpF outer membrane complex and with the inner membrane ABC transporter complex MlaFEDB, via direct interaction with MlaD.

Its subcellular location is the periplasm. Functionally, involved in a phospholipid transport pathway that maintains lipid asymmetry in the outer membrane by retrograde trafficking of phospholipids from the outer membrane to the inner membrane. May transfer phospholipid across the periplasmic space and deliver it to the MlaFEDB complex at the inner membrane. The protein is Intermembrane phospholipid transport system binding protein MlaC of Escherichia coli (strain K12).